The primary structure comprises 222 residues: Thiamine-phosphate synthase (222 aa).

4-amino-2-methyl-5-(diphosphooxymethyl)pyrimidine contacts are provided by residues Gln44–Lys48 and Asn79. Residues Asp80 and Asp99 each contribute to the Mg(2+) site. Position 117 (Ser117) interacts with 4-amino-2-methyl-5-(diphosphooxymethyl)pyrimidine. Thr143–Thr145 contributes to the 2-[(2R,5Z)-2-carboxy-4-methylthiazol-5(2H)-ylidene]ethyl phosphate binding site. Lys146 is a binding site for 4-amino-2-methyl-5-(diphosphooxymethyl)pyrimidine. Residues Gly175 and Ile195 to Ser196 each bind 2-[(2R,5Z)-2-carboxy-4-methylthiazol-5(2H)-ylidene]ethyl phosphate.

This sequence belongs to the thiamine-phosphate synthase family. As to quaternary structure, monomer. Mg(2+) serves as cofactor.

The catalysed reaction is 2-[(2R,5Z)-2-carboxy-4-methylthiazol-5(2H)-ylidene]ethyl phosphate + 4-amino-2-methyl-5-(diphosphooxymethyl)pyrimidine + 2 H(+) = thiamine phosphate + CO2 + diphosphate. It catalyses the reaction 2-(2-carboxy-4-methylthiazol-5-yl)ethyl phosphate + 4-amino-2-methyl-5-(diphosphooxymethyl)pyrimidine + 2 H(+) = thiamine phosphate + CO2 + diphosphate. It carries out the reaction 4-methyl-5-(2-phosphooxyethyl)-thiazole + 4-amino-2-methyl-5-(diphosphooxymethyl)pyrimidine + H(+) = thiamine phosphate + diphosphate. It functions in the pathway cofactor biosynthesis; thiamine diphosphate biosynthesis; thiamine phosphate from 4-amino-2-methyl-5-diphosphomethylpyrimidine and 4-methyl-5-(2-phosphoethyl)-thiazole: step 1/1. Functionally, condenses 4-methyl-5-(beta-hydroxyethyl)thiazole monophosphate (THZ-P) and 2-methyl-4-amino-5-hydroxymethyl pyrimidine pyrophosphate (HMP-PP) to form thiamine monophosphate (TMP). Is also able to use the 2-methoxy analog MeO-HMP-PP, as substrate in vitro, but not the 2-trifluoromethyl analog CF(3)-HMP-PP. The protein is Thiamine-phosphate synthase (thiE) of Bacillus subtilis (strain 168).